The primary structure comprises 262 residues: MIDKSAFVHPTAIVEEGASIGANAHIGPFCIVGPHVGIGEGTVLKSHVVVNGHTKIGRDNEIYQFASIGEVNQDLKYAGEPTRVEIGDRNRIRESVTIHRGTVQGGGLTKVGSDNLLMINAHIAHDCTVGNRCILANNATLAGHVSVDDFAIIGGMTAVHQFCIIGAHVMVGGCSGVAQDVPPYVIAQGNHATPFGVNIEGLKRRGFSREAITAIRNAYKLIYRSGKTLDEVKPEIAELAETYPEVKAFTDFFSRSTRGLIR.

It belongs to the transferase hexapeptide repeat family. LpxA subfamily. In terms of assembly, homotrimer.

Its subcellular location is the cytoplasm. It catalyses the reaction a (3R)-hydroxyacyl-[ACP] + UDP-N-acetyl-alpha-D-glucosamine = a UDP-3-O-[(3R)-3-hydroxyacyl]-N-acetyl-alpha-D-glucosamine + holo-[ACP]. The protein operates within glycolipid biosynthesis; lipid IV(A) biosynthesis; lipid IV(A) from (3R)-3-hydroxytetradecanoyl-[acyl-carrier-protein] and UDP-N-acetyl-alpha-D-glucosamine: step 1/6. Functionally, involved in the biosynthesis of lipid A, a phosphorylated glycolipid that anchors the lipopolysaccharide to the outer membrane of the cell. This is Acyl-[acyl-carrier-protein]--UDP-N-acetylglucosamine O-acyltransferase from Shigella boydii serotype 18 (strain CDC 3083-94 / BS512).